The following is a 153-amino-acid chain: uncharacterized protein (153 aa).

This is an uncharacterized protein from Ureaplasma parvum serovar 3 (strain ATCC 700970).